A 152-amino-acid polypeptide reads, in one-letter code: Transcriptional regulator MraZ (152 aa).

SpoVT-AbrB domains follow at residues 5–52 and 81–124; these read ANAI…PLPE and ATEG…DHSV.

Belongs to the MraZ family. In terms of assembly, forms oligomers.

It localises to the cytoplasm. Its subcellular location is the nucleoid. The protein is Transcriptional regulator MraZ of Pseudoalteromonas atlantica (strain T6c / ATCC BAA-1087).